The chain runs to 644 residues: UvrABC system protein C (644 aa).

The region spanning alanine 47 to valine 125 is the GIY-YIG domain. The UVR domain occupies threonine 235–isoleucine 270.

This sequence belongs to the UvrC family. As to quaternary structure, interacts with UvrB in an incision complex.

The protein localises to the cytoplasm. Functionally, the UvrABC repair system catalyzes the recognition and processing of DNA lesions. UvrC both incises the 5' and 3' sides of the lesion. The N-terminal half is responsible for the 3' incision and the C-terminal half is responsible for the 5' incision. This chain is UvrABC system protein C, found in Sphingopyxis alaskensis (strain DSM 13593 / LMG 18877 / RB2256) (Sphingomonas alaskensis).